Consider the following 238-residue polypeptide: 3-dehydroquinate dehydratase (238 aa).

3-dehydroquinate contacts are provided by residues 35 to 37 (ELR) and arginine 70. Catalysis depends on histidine 133, which acts as the Proton donor/acceptor. The active-site Schiff-base intermediate with substrate is lysine 160. 3-dehydroquinate contacts are provided by arginine 202 and glutamine 225.

Belongs to the type-I 3-dehydroquinase family. As to quaternary structure, homodimer.

The catalysed reaction is 3-dehydroquinate = 3-dehydroshikimate + H2O. Its pathway is metabolic intermediate biosynthesis; chorismate biosynthesis; chorismate from D-erythrose 4-phosphate and phosphoenolpyruvate: step 3/7. Functionally, involved in the third step of the chorismate pathway, which leads to the biosynthesis of aromatic amino acids. Catalyzes the cis-dehydration of 3-dehydroquinate (DHQ) and introduces the first double bond of the aromatic ring to yield 3-dehydroshikimate. The polypeptide is 3-dehydroquinate dehydratase (Staphylococcus aureus (strain USA300)).